Reading from the N-terminus, the 84-residue chain is Sporulation-specific transcription factor SpoVIF (84 aa).

It is found in the cytoplasm. Functionally, transcription factor involved in spore coat assembly and spore resistance. Required for gene regulation during the latter stages of sporulation. Regulates the transcription of at least cgeA, cotG and cotS. May directly or indirectly control the function of the GerE protein. The sequence is that of Sporulation-specific transcription factor SpoVIF from Bacillus subtilis (strain 168).